Reading from the N-terminus, the 73-residue chain is Translation initiation factor IF-1 (73 aa).

The 73-residue stretch at 1–73 folds into the S1-like domain; it reads MAKKEDTLVL…TKARVVYRHR (73 aa).

Belongs to the IF-1 family. As to quaternary structure, component of the 30S ribosomal translation pre-initiation complex which assembles on the 30S ribosome in the order IF-2 and IF-3, IF-1 and N-formylmethionyl-tRNA(fMet); mRNA recruitment can occur at any time during PIC assembly.

The protein resides in the cytoplasm. In terms of biological role, one of the essential components for the initiation of protein synthesis. Stabilizes the binding of IF-2 and IF-3 on the 30S subunit to which N-formylmethionyl-tRNA(fMet) subsequently binds. Helps modulate mRNA selection, yielding the 30S pre-initiation complex (PIC). Upon addition of the 50S ribosomal subunit IF-1, IF-2 and IF-3 are released leaving the mature 70S translation initiation complex. This is Translation initiation factor IF-1 from Chlamydia pneumoniae (Chlamydophila pneumoniae).